The chain runs to 180 residues: Shikimate kinase (180 aa).

An ATP-binding site is contributed by 14 to 19; the sequence is GAGKSS. A Mg(2+)-binding site is contributed by serine 18. Substrate-binding residues include aspartate 36, arginine 60, and glycine 82. Arginine 120 contributes to the ATP binding site. Arginine 139 contacts substrate.

Belongs to the shikimate kinase family. As to quaternary structure, monomer. The cofactor is Mg(2+).

It is found in the cytoplasm. The enzyme catalyses shikimate + ATP = 3-phosphoshikimate + ADP + H(+). Its pathway is metabolic intermediate biosynthesis; chorismate biosynthesis; chorismate from D-erythrose 4-phosphate and phosphoenolpyruvate: step 5/7. Functionally, catalyzes the specific phosphorylation of the 3-hydroxyl group of shikimic acid using ATP as a cosubstrate. This chain is Shikimate kinase, found in Xylella fastidiosa (strain M23).